The following is a 37-amino-acid chain: Large ribosomal subunit protein bL36 (37 aa).

Belongs to the bacterial ribosomal protein bL36 family.

The protein is Large ribosomal subunit protein bL36 of Leptospira biflexa serovar Patoc (strain Patoc 1 / Ames).